We begin with the raw amino-acid sequence, 262 residues long: Acyl-[acyl-carrier-protein]--UDP-N-acetylglucosamine O-acyltransferase (262 aa).

The protein belongs to the transferase hexapeptide repeat family. LpxA subfamily. In terms of assembly, homotrimer.

The protein localises to the cytoplasm. It catalyses the reaction a (3R)-hydroxyacyl-[ACP] + UDP-N-acetyl-alpha-D-glucosamine = a UDP-3-O-[(3R)-3-hydroxyacyl]-N-acetyl-alpha-D-glucosamine + holo-[ACP]. The protein operates within glycolipid biosynthesis; lipid IV(A) biosynthesis; lipid IV(A) from (3R)-3-hydroxytetradecanoyl-[acyl-carrier-protein] and UDP-N-acetyl-alpha-D-glucosamine: step 1/6. In terms of biological role, involved in the biosynthesis of lipid A, a phosphorylated glycolipid that anchors the lipopolysaccharide to the outer membrane of the cell. The protein is Acyl-[acyl-carrier-protein]--UDP-N-acetylglucosamine O-acyltransferase of Yersinia enterocolitica serotype O:8 / biotype 1B (strain NCTC 13174 / 8081).